Reading from the N-terminus, the 445-residue chain is 6-phosphogluconate dehydrogenase, decarboxylating (445 aa).

NADP(+) contacts are provided by residues 1–4, 22–24, 63–65, and Asn-91; these read AVMG, NRS, and VKA. Substrate is bound by residues Asn-91 and 117–119; that span reads SGG. The active-site Proton acceptor is Lys-172. Residue 175-176 coordinates substrate; that stretch reads HN. The Proton donor role is filled by Glu-179. Tyr-180, Lys-249, Arg-276, Arg-434, and His-440 together coordinate substrate.

The protein belongs to the 6-phosphogluconate dehydrogenase family. In terms of assembly, homodimer.

The catalysed reaction is 6-phospho-D-gluconate + NADP(+) = D-ribulose 5-phosphate + CO2 + NADPH. Its pathway is carbohydrate degradation; pentose phosphate pathway; D-ribulose 5-phosphate from D-glucose 6-phosphate (oxidative stage): step 3/3. In terms of biological role, catalyzes the oxidative decarboxylation of 6-phosphogluconate to ribulose 5-phosphate and CO(2), with concomitant reduction of NADP to NADPH. This is 6-phosphogluconate dehydrogenase, decarboxylating (gnd) from Shigella sonnei.